Consider the following 308-residue polypeptide: Ribosomal RNA small subunit methyltransferase H (308 aa).

S-adenosyl-L-methionine is bound by residues 36-38, D55, F86, D103, and Q110; that span reads GGH.

Belongs to the methyltransferase superfamily. RsmH family.

Its subcellular location is the cytoplasm. It catalyses the reaction cytidine(1402) in 16S rRNA + S-adenosyl-L-methionine = N(4)-methylcytidine(1402) in 16S rRNA + S-adenosyl-L-homocysteine + H(+). In terms of biological role, specifically methylates the N4 position of cytidine in position 1402 (C1402) of 16S rRNA. This chain is Ribosomal RNA small subunit methyltransferase H, found in Helicobacter pylori (strain Shi470).